Here is a 180-residue protein sequence, read N- to C-terminus: MHTINSPDVPSAHAIREQLRAGSEIHVRGHVTHKHHKDFSVELLSGPHIVLHVNFRFEHDHIVAMNTCTNGAWGAEIRHHNPLKHHDHFNLSIHVHEGYYHISVNGEHLADFPHRFPVESVQAIGLKGAAHIDEISFSGFEFGVDWNSQHDFGHAGYNSYGTETYVAPVFQETHSYNAYF.

The 128-residue stretch at 11-138 folds into the Galectin domain; sequence SAHAIREQLR…AAHIDEISFS (128 aa).

This chain is Probable galaptin lec-8 (lec-8), found in Caenorhabditis elegans.